A 408-amino-acid chain; its full sequence is D-inositol 3-phosphate glycosyltransferase (408 aa).

Histidine 7 contacts 1D-myo-inositol 3-phosphate. UDP-N-acetyl-alpha-D-glucosamine is bound by residues 13-14 (QP) and glycine 21. 1D-myo-inositol 3-phosphate contacts are provided by residues 18 to 23 (DAGGMN), lysine 76, tyrosine 109, threonine 133, and arginine 153. Residues arginine 227, lysine 232, and valine 288 each contribute to the UDP-N-acetyl-alpha-D-glucosamine site. Phenylalanine 297, arginine 298, and alanine 300 together coordinate Mg(2+). The UDP-N-acetyl-alpha-D-glucosamine site is built by glutamate 310 and glutamate 318. Residue threonine 324 coordinates Mg(2+).

It belongs to the glycosyltransferase group 1 family. MshA subfamily. In terms of assembly, homodimer.

The enzyme catalyses 1D-myo-inositol 3-phosphate + UDP-N-acetyl-alpha-D-glucosamine = 1D-myo-inositol 2-acetamido-2-deoxy-alpha-D-glucopyranoside 3-phosphate + UDP + H(+). Its function is as follows. Catalyzes the transfer of a N-acetyl-glucosamine moiety to 1D-myo-inositol 3-phosphate to produce 1D-myo-inositol 2-acetamido-2-deoxy-glucopyranoside 3-phosphate in the mycothiol biosynthesis pathway. This Paenarthrobacter aurescens (strain TC1) protein is D-inositol 3-phosphate glycosyltransferase.